Consider the following 460-residue polypeptide: tRNA (guanine(37)-N(1))-methyltransferase (460 aa).

S-adenosyl-L-methionine is bound by residues His-204, 243–244 (DL), 271–272 (DA), and Asn-292. The segment covering 390-428 (ASTTTTPTTSNTNTSTTTSTTSTSTTTTESTNTNNSANN) has biased composition (low complexity). A disordered region spans residues 390 to 460 (ASTTTTPTTS…SIDTNKKLKN (71 aa)). A compositionally biased stretch (acidic residues) spans 442–451 (DSNETNETDS).

The protein belongs to the class I-like SAM-binding methyltransferase superfamily. TRM5/TYW2 family. Monomer.

The protein resides in the mitochondrion matrix. It localises to the nucleus. Its subcellular location is the cytoplasm. It carries out the reaction guanosine(37) in tRNA + S-adenosyl-L-methionine = N(1)-methylguanosine(37) in tRNA + S-adenosyl-L-homocysteine + H(+). Functionally, specifically methylates the N1 position of guanosine-37 in various cytoplasmic and mitochondrial tRNAs. Methylation is not dependent on the nature of the nucleoside 5' of the target nucleoside. This is the first step in the biosynthesis of wybutosine (yW), a modified base adjacent to the anticodon of tRNAs and required for accurate decoding. This Dictyostelium discoideum (Social amoeba) protein is tRNA (guanine(37)-N(1))-methyltransferase (trmt5).